The sequence spans 105 residues: U2-lycotoxin-Ls1d (105 aa).

An N-terminal signal peptide occupies residues 1–17 (MIKYVLISALLVVAVYS). Positions 18 to 41 (FTIEDNEDALLEEAEDELDTEEER) are excised as a propeptide. 4 cysteine pairs are disulfide-bonded: C51–C67, C58–C97, C60–C83, and C69–C81.

It belongs to the neurotoxin 04 (omega-agtx) family. 01 (type I omega-agtx) subfamily. As to expression, expressed by the venom gland.

Its subcellular location is the secreted. Insecticidal to house crickets. It induces an excitatory slow-onset impact that leads to irreversible spastic paralysis. It also modifies human voltage-gated potassium channel Kv1.5/KCNA5. Most likely, it binds to the voltage-sensing domain of the channel, suggesting it does not block the pore but prevents its opening at physiological membrane potentials. The recombinant peptide binds to the channel in an irreversible manner and slows down the hKv1.5 current activation kinetics. It is not toxic to mice, when intracranially injected (at 0.5 ug/g mouse). This Lycosa singoriensis (Wolf spider) protein is U2-lycotoxin-Ls1d.